Reading from the N-terminus, the 141-residue chain is 3-hydroxyacyl-[acyl-carrier-protein] dehydratase FabZ (141 aa).

Histidine 48 is a catalytic residue.

It belongs to the thioester dehydratase family. FabZ subfamily.

The protein resides in the cytoplasm. The catalysed reaction is a (3R)-hydroxyacyl-[ACP] = a (2E)-enoyl-[ACP] + H2O. Its function is as follows. Involved in unsaturated fatty acids biosynthesis. Catalyzes the dehydration of short chain beta-hydroxyacyl-ACPs and long chain saturated and unsaturated beta-hydroxyacyl-ACPs. In Bacillus velezensis (strain DSM 23117 / BGSC 10A6 / LMG 26770 / FZB42) (Bacillus amyloliquefaciens subsp. plantarum), this protein is 3-hydroxyacyl-[acyl-carrier-protein] dehydratase FabZ.